The chain runs to 310 residues: Pantothenate kinase (310 aa).

Residue 95–102 (GSVAVGKS) participates in ATP binding.

This sequence belongs to the prokaryotic pantothenate kinase family.

Its subcellular location is the cytoplasm. The enzyme catalyses (R)-pantothenate + ATP = (R)-4'-phosphopantothenate + ADP + H(+). It participates in cofactor biosynthesis; coenzyme A biosynthesis; CoA from (R)-pantothenate: step 1/5. This is Pantothenate kinase from Mycobacteroides abscessus (strain ATCC 19977 / DSM 44196 / CCUG 20993 / CIP 104536 / JCM 13569 / NCTC 13031 / TMC 1543 / L948) (Mycobacterium abscessus).